An 880-amino-acid polypeptide reads, in one-letter code: DNA-directed RNA polymerase subunit Rpo1N (880 aa).

Residues Cys58, Cys61, Cys68, and His71 each contribute to the Zn(2+) site. Residues Lys88 and 92-95 each bind dsDNA; that span reads EFLK. Positions 98 and 101 each coordinate Zn(2+). Lys138 serves as a coordination point for dsDNA. Cys146 and Cys149 together coordinate Zn(2+). DsDNA is bound by residues Lys303, 305 to 310, Arg323, and Gln422; that span reads KEGRFR. Asp456, Asp458, and Asp460 together coordinate Mg(2+). The Zn(2+) site is built by Arg573, Cys575, Cys580, and His582. DsDNA contacts are provided by residues 812-822 and Gln815; that span reads RTSQSGYMQRR.

The protein belongs to the RNA polymerase beta' chain family. Part of the 13-subunit RNA polymerase complex. Rpo1N and Rpo5 form a cleft which docks Rpo13. Interacts with Rpo8 on the periphery of the clamp head. The cofactor is Mg(2+). Zn(2+) is required as a cofactor.

It is found in the cytoplasm. It carries out the reaction RNA(n) + a ribonucleoside 5'-triphosphate = RNA(n+1) + diphosphate. DNA-dependent RNA polymerase (RNAP) catalyzes the transcription of DNA into RNA using the four ribonucleoside triphosphates as substrates. Forms the clamp head domain. The chain is DNA-directed RNA polymerase subunit Rpo1N from Saccharolobus shibatae (strain ATCC 51178 / DSM 5389 / JCM 8931 / NBRC 15437 / B12) (Sulfolobus shibatae).